The following is a 162-amino-acid chain: EF-hand calcium-binding domain-containing protein 11 (162 aa).

EF-hand domains are found at residues 18–53, 91–126, and 127–162; these read SERRKWVEVFKACDEDNKGYLSREDFKVAIVMLFGY, LYRNEIRHIFTAFDVHYRGFLTLEDFKRAFSQVAPK, and LPSRTVLEVFREADQDSDGHVSFRDFEYAMNHGKAK. Asp-140, Asp-142, Asp-144, His-146, and Asp-151 together coordinate Ca(2+).

The protein is EF-hand calcium-binding domain-containing protein 11 (Efcab11) of Rattus norvegicus (Rat).